Reading from the N-terminus, the 189-residue chain is MGVSVDVHQVYKYPFEQVVASFLRKYPNPMDKNVISVKIMEEKRDESTGVIYRKRIAICQNVVPEILRKSLSTLVILCWKKVSILKVPNIQLEEESWLNPRERNMAIRSHCLTWTQYASMKEESVFRESMENPNWTEFIQRGRISITGVGFLNCVLETFASTFLRQGAQKGIRIMEMLLKEQCGAPLAE.

Residues 1–187 (MGVSVDVHQV…LLKEQCGAPL (187 aa)) form the PRELI/MSF1 domain.

In Homo sapiens (Human), this protein is PRELI domain-containing protein 2 (PRELID2).